The primary structure comprises 506 residues: Peptidyl-prolyl cis-trans isomerase CYP59 (506 aa).

The PPIase cyclophilin-type domain occupies Met-1–Ile-161. One can recognise an RRM domain in the interval Asn-243–Ser-321. Residues Gly-341–Gly-357 form a CCHC-type zinc finger. Basic and acidic residues-rich tracts occupy residues Glu-388–Gln-404 and Gly-412–Arg-506. Residues Glu-388–Arg-506 are disordered.

This sequence belongs to the cyclophilin-type PPIase family. Component of the BZR1 complex. Interacts with NRPB1 (via CTD domain), SCL28, SCL30, SCL30A, SCL33, SC35, SR30, SR34, RSZ21, RS2Z33, RS31 and RS40. Ubiquitous.

It localises to the nucleus. The catalysed reaction is [protein]-peptidylproline (omega=180) = [protein]-peptidylproline (omega=0). PPIases accelerate the folding of proteins. It catalyzes the cis-trans isomerization of proline imidic peptide bonds in oligopeptides. Influences somehow regulation of RNA pol II (CTD) phosphorylation. Binds RNA with preferences for GC-rich sequences. Probably involved in activities connecting transcription and pre-mRNA processing. Involved in brassinostroid response. In Arabidopsis thaliana (Mouse-ear cress), this protein is Peptidyl-prolyl cis-trans isomerase CYP59 (CYP59).